Reading from the N-terminus, the 591-residue chain is NADH-quinone oxidoreductase subunit C/D (591 aa).

The segment at 1 to 182 (MVTVVENIDP…TPYFLNTAKQ (182 aa)) is NADH dehydrogenase I subunit C. An NADH dehydrogenase I subunit D region spans residues 206–591 (DFMFLNIGPN…IDVVMADCDR (386 aa)).

The protein in the N-terminal section; belongs to the complex I 30 kDa subunit family. This sequence in the C-terminal section; belongs to the complex I 49 kDa subunit family. In terms of assembly, NDH-1 is composed of 13 different subunits. Subunits NuoB, CD, E, F, and G constitute the peripheral sector of the complex.

The protein localises to the cell inner membrane. It carries out the reaction a quinone + NADH + 5 H(+)(in) = a quinol + NAD(+) + 4 H(+)(out). In terms of biological role, NDH-1 shuttles electrons from NADH, via FMN and iron-sulfur (Fe-S) centers, to quinones in the respiratory chain. The immediate electron acceptor for the enzyme in this species is believed to be ubiquinone. Couples the redox reaction to proton translocation (for every two electrons transferred, four hydrogen ions are translocated across the cytoplasmic membrane), and thus conserves the redox energy in a proton gradient. The sequence is that of NADH-quinone oxidoreductase subunit C/D from Psychrobacter arcticus (strain DSM 17307 / VKM B-2377 / 273-4).